Consider the following 265-residue polypeptide: Ribosomal RNA small subunit methyltransferase A (265 aa).

The S-adenosyl-L-methionine site is built by H13, L15, G40, E61, D85, and N103.

This sequence belongs to the class I-like SAM-binding methyltransferase superfamily. rRNA adenine N(6)-methyltransferase family. RsmA subfamily.

The protein localises to the cytoplasm. It carries out the reaction adenosine(1518)/adenosine(1519) in 16S rRNA + 4 S-adenosyl-L-methionine = N(6)-dimethyladenosine(1518)/N(6)-dimethyladenosine(1519) in 16S rRNA + 4 S-adenosyl-L-homocysteine + 4 H(+). Its function is as follows. Specifically dimethylates two adjacent adenosines (A1518 and A1519) in the loop of a conserved hairpin near the 3'-end of 16S rRNA in the 30S particle. May play a critical role in biogenesis of 30S subunits. This Bordetella pertussis (strain Tohama I / ATCC BAA-589 / NCTC 13251) protein is Ribosomal RNA small subunit methyltransferase A.